The following is a 170-amino-acid chain: Ribosome maturation factor RimM (170 aa).

Residues 95 to 168 (EDAYYYHEIV…IIKVQLMEGM (74 aa)) form the PRC barrel domain.

Belongs to the RimM family. Binds ribosomal protein uS19.

Its subcellular location is the cytoplasm. Its function is as follows. An accessory protein needed during the final step in the assembly of 30S ribosomal subunit, possibly for assembly of the head region. Essential for efficient processing of 16S rRNA. May be needed both before and after RbfA during the maturation of 16S rRNA. It has affinity for free ribosomal 30S subunits but not for 70S ribosomes. In Oceanobacillus iheyensis (strain DSM 14371 / CIP 107618 / JCM 11309 / KCTC 3954 / HTE831), this protein is Ribosome maturation factor RimM.